The primary structure comprises 193 residues: Holliday junction branch migration complex subunit RuvA (193 aa).

The domain I stretch occupies residues Met-1–Gly-64. The interval Thr-65–Met-139 is domain II. The flexible linker stretch occupies residues Met-139–Ala-143. Positions Ser-144–Gly-193 are domain III.

The protein belongs to the RuvA family. As to quaternary structure, homotetramer. Forms an RuvA(8)-RuvB(12)-Holliday junction (HJ) complex. HJ DNA is sandwiched between 2 RuvA tetramers; dsDNA enters through RuvA and exits via RuvB. An RuvB hexamer assembles on each DNA strand where it exits the tetramer. Each RuvB hexamer is contacted by two RuvA subunits (via domain III) on 2 adjacent RuvB subunits; this complex drives branch migration. In the full resolvosome a probable DNA-RuvA(4)-RuvB(12)-RuvC(2) complex forms which resolves the HJ.

Its subcellular location is the cytoplasm. Functionally, the RuvA-RuvB-RuvC complex processes Holliday junction (HJ) DNA during genetic recombination and DNA repair, while the RuvA-RuvB complex plays an important role in the rescue of blocked DNA replication forks via replication fork reversal (RFR). RuvA specifically binds to HJ cruciform DNA, conferring on it an open structure. The RuvB hexamer acts as an ATP-dependent pump, pulling dsDNA into and through the RuvAB complex. HJ branch migration allows RuvC to scan DNA until it finds its consensus sequence, where it cleaves and resolves the cruciform DNA. The chain is Holliday junction branch migration complex subunit RuvA from Paraburkholderia xenovorans (strain LB400).